A 194-amino-acid polypeptide reads, in one-letter code: Acireductone dioxygenase 1 (194 aa).

A disordered region spans residues 1 to 21 (MEAWYMDDSADDQRKPHHRSP). Fe(2+) is bound by residues H87, H89, E93, and H132. Ni(2+) is bound by residues H87, H89, E93, and H132.

The protein belongs to the acireductone dioxygenase (ARD) family. It depends on Fe(2+) as a cofactor. The cofactor is Ni(2+).

It is found in the cytoplasm. Its subcellular location is the nucleus. The catalysed reaction is 1,2-dihydroxy-5-(methylsulfanyl)pent-1-en-3-one + O2 = 4-methylsulfanyl-2-oxobutanoate + formate + 2 H(+). It carries out the reaction 1,2-dihydroxy-5-(methylsulfanyl)pent-1-en-3-one + O2 = 3-(methylsulfanyl)propanoate + CO + formate + 2 H(+). It participates in amino-acid biosynthesis; L-methionine biosynthesis via salvage pathway; L-methionine from S-methyl-5-thio-alpha-D-ribose 1-phosphate: step 5/6. Catalyzes 2 different reactions between oxygen and the acireductone 1,2-dihydroxy-3-keto-5-methylthiopentene (DHK-MTPene) depending upon the metal bound in the active site. Fe-containing acireductone dioxygenase (Fe-ARD) produces formate and 2-keto-4-methylthiobutyrate (KMTB), the alpha-ketoacid precursor of methionine in the methionine recycle pathway. Ni-containing acireductone dioxygenase (Ni-ARD) produces methylthiopropionate, carbon monoxide and formate, and does not lie on the methionine recycle pathway. The polypeptide is Acireductone dioxygenase 1 (Physcomitrium patens (Spreading-leaved earth moss)).